Consider the following 314-residue polypeptide: DNA-directed RNA polymerase subunit alpha (314 aa).

The alpha N-terminal domain (alpha-NTD) stretch occupies residues 1-228 (MIEIEKPRIE…EHLNIFVSLT (228 aa)). The segment at 245-314 (KEKVLEMSIE…DLGLGLRKED (70 aa)) is alpha C-terminal domain (alpha-CTD).

Belongs to the RNA polymerase alpha chain family. As to quaternary structure, homodimer. The RNAP catalytic core consists of 2 alpha, 1 beta, 1 beta' and 1 omega subunit. When a sigma factor is associated with the core the holoenzyme is formed, which can initiate transcription.

The enzyme catalyses RNA(n) + a ribonucleoside 5'-triphosphate = RNA(n+1) + diphosphate. In terms of biological role, DNA-dependent RNA polymerase catalyzes the transcription of DNA into RNA using the four ribonucleoside triphosphates as substrates. This is DNA-directed RNA polymerase subunit alpha from Staphylococcus epidermidis (strain ATCC 35984 / DSM 28319 / BCRC 17069 / CCUG 31568 / BM 3577 / RP62A).